The chain runs to 94 residues: Host-modulation protein 11K (94 aa).

As to quaternary structure, interacts with host GRB2; this interaction alters host cell environment by modulating host signaling pathways.

The protein resides in the host cytoplasm. Functionally, enhances viral DNA replication and virion release. Mechansitically, optimizes viral DNA replication by interacting with host GRB2 to inhibit the negative effect of ERK signaling on B19 viral replication. Plays a role in viral infectivity. Induces apoptosis of primary erythroid progenitor cells. The chain is Host-modulation protein 11K (11K) from Human parvovirus B19 (strain HV) (HPV B19).